Here is an 86-residue protein sequence, read N- to C-terminus: Small ribosomal subunit protein bS20 (86 aa).

The segment covering 1–27 has biased composition (basic residues); the sequence is MANSKSAKKRATQAERRRQHNASRRSM. The interval 1–28 is disordered; the sequence is MANSKSAKKRATQAERRRQHNASRRSMM.

The protein belongs to the bacterial ribosomal protein bS20 family.

Its function is as follows. Binds directly to 16S ribosomal RNA. This Aliivibrio salmonicida (strain LFI1238) (Vibrio salmonicida (strain LFI1238)) protein is Small ribosomal subunit protein bS20.